A 331-amino-acid chain; its full sequence is Ferrochelatase (331 aa).

Fe cation is bound by residues histidine 187 and glutamate 286.

It belongs to the ferrochelatase family.

It localises to the cytoplasm. The catalysed reaction is heme b + 2 H(+) = protoporphyrin IX + Fe(2+). It functions in the pathway porphyrin-containing compound metabolism; protoheme biosynthesis; protoheme from protoporphyrin-IX: step 1/1. In terms of biological role, catalyzes the ferrous insertion into protoporphyrin IX. The polypeptide is Ferrochelatase (Legionella pneumophila (strain Lens)).